The following is an 86-amino-acid chain: uncharacterized protein (86 aa).

This is an uncharacterized protein from Schizosaccharomyces pombe (strain 972 / ATCC 24843) (Fission yeast).